Reading from the N-terminus, the 63-residue chain is MSGQQSQINAGGGNGQGGDTPEFDAGQVSINSAGTDDLLDEIDGLLESNAEEFVRSYVQKGGE.

Residues 1–35 (MSGQQSQINAGGGNGQGGDTPEFDAGQVSINSAGT) are disordered. The tract at residues 19–57 (DTPEFDAGQVSINSAGTDDLLDEIDGLLESNAEEFVRSY) is ARC ATPase binding. Residue glutamate 63 forms an Isoglutamyl lysine isopeptide (Glu-Lys) (interchain with K-? in acceptor proteins) linkage.

Belongs to the prokaryotic ubiquitin-like protein family. In terms of assembly, strongly interacts with the proteasome-associated ATPase ARC through a hydrophobic interface; the interacting region of Pup lies in its C-terminal half. There is one Pup binding site per ARC hexamer ring.

Its pathway is protein degradation; proteasomal Pup-dependent pathway. Its function is as follows. Protein modifier that is covalently attached to lysine residues of substrate proteins, thereby targeting them for proteasomal degradation. The tagging system is termed pupylation. This chain is Prokaryotic ubiquitin-like protein Pup, found in Corynebacterium aurimucosum (strain ATCC 700975 / DSM 44827 / CIP 107346 / CN-1) (Corynebacterium nigricans).